The chain runs to 175 residues: Glucagon family neuropeptides (175 aa).

Positions 1–23 are cleaved as a signal peptide; the sequence is MSGNVYKTLLTLLVYGLIMHCNV. A propeptide spanning residues 24 to 80 is cleaved from the precursor; sequence YCSPDRWTPVPGAKLEEEVYDEDGNTLQDFALRAGAPGGGGPRPRWGRCTALYYPPG. Residues 149–157 are important for receptor binding; sequence VKKYLAAVL. Residue Leu157 is modified to Leucine amide. Lys168 is subject to Lysine amide. The propeptide occupies 172-175; the sequence is VAYL.

Belongs to the glucagon family.

It localises to the secreted. Its function is as follows. Primary role of GRF is to release GH from the pituitary. Functionally, PACAP is a neuropeptide involved in diverse array of physiological processes through activating the PACAP subfamily of class B1 G protein-coupled receptors: VIP receptor 1 (VIPR1), VIP receptor 2 (VIPR2), and PACAP type I receptor (ADCYAP1R1). Exerts neuroprotective and general cytoprotective effects due to anti-apoptotic, anti-inflammatory, and antioxidant actions. Promotes neuron projection development through the RAPGEF2/Rap1/B-Raf/ERK pathway. In chromaffin cells, induces long-lasting increase of intracellular calcium concentrations and neuroendocrine secretion. Involved in the control of glucose homeostasis, induces insulin secretion by pancreatic beta cells. PACAP exists in two bioactive forms from proteolysis of the same precursor protein, PACAP27 and PACAP38, which differ by eleven amino acid residues in the C-terminus. In Gallus gallus (Chicken), this protein is Glucagon family neuropeptides (ADCYAP1).